Here is a 211-residue protein sequence, read N- to C-terminus: C-type lectin domain-containing protein 158 (211 aa).

The signal sequence occupies residues 1 to 16; the sequence is MQKFILSAFVVALVAA.

This is C-type lectin domain-containing protein 158 (clec-158) from Caenorhabditis elegans.